The chain runs to 271 residues: 3-methyl-2-oxobutanoate hydroxymethyltransferase (271 aa).

Residues Asp53 and Asp92 each coordinate Mg(2+). 3-methyl-2-oxobutanoate-binding positions include 53–54 (DS), Asp92, and Lys120. Glu122 is a binding site for Mg(2+). Glu189 serves as the catalytic Proton acceptor.

It belongs to the PanB family. As to quaternary structure, homodecamer; pentamer of dimers. Mg(2+) is required as a cofactor.

The protein localises to the cytoplasm. It catalyses the reaction 3-methyl-2-oxobutanoate + (6R)-5,10-methylene-5,6,7,8-tetrahydrofolate + H2O = 2-dehydropantoate + (6S)-5,6,7,8-tetrahydrofolate. It functions in the pathway cofactor biosynthesis; (R)-pantothenate biosynthesis; (R)-pantoate from 3-methyl-2-oxobutanoate: step 1/2. In terms of biological role, catalyzes the reversible reaction in which hydroxymethyl group from 5,10-methylenetetrahydrofolate is transferred onto alpha-ketoisovalerate to form ketopantoate. The protein is 3-methyl-2-oxobutanoate hydroxymethyltransferase of Burkholderia mallei (strain NCTC 10247).